The sequence spans 427 residues: Serine--tRNA ligase (427 aa).

Position 231 to 233 (231 to 233 (TAE)) interacts with L-serine. Residue 262–264 (RSE) participates in ATP binding. Residue Glu285 coordinates L-serine. Position 349 to 352 (349 to 352 (EISS)) interacts with ATP. Ser385 serves as a coordination point for L-serine.

This sequence belongs to the class-II aminoacyl-tRNA synthetase family. Type-1 seryl-tRNA synthetase subfamily. In terms of assembly, homodimer. The tRNA molecule binds across the dimer.

It localises to the cytoplasm. It carries out the reaction tRNA(Ser) + L-serine + ATP = L-seryl-tRNA(Ser) + AMP + diphosphate + H(+). The enzyme catalyses tRNA(Sec) + L-serine + ATP = L-seryl-tRNA(Sec) + AMP + diphosphate + H(+). The protein operates within aminoacyl-tRNA biosynthesis; selenocysteinyl-tRNA(Sec) biosynthesis; L-seryl-tRNA(Sec) from L-serine and tRNA(Sec): step 1/1. In terms of biological role, catalyzes the attachment of serine to tRNA(Ser). Is also able to aminoacylate tRNA(Sec) with serine, to form the misacylated tRNA L-seryl-tRNA(Sec), which will be further converted into selenocysteinyl-tRNA(Sec). In Brucella canis (strain ATCC 23365 / NCTC 10854 / RM-666), this protein is Serine--tRNA ligase.